The chain runs to 673 residues: Protein kinase ORF74 (673 aa).

The 277-residue stretch at 128-404 (TDTDEAVARG…ARELLVYPRY (277 aa)) folds into the Protein kinase domain. D252 acts as the Proton acceptor in catalysis. Residues 340-364 (MDNDALDSRRTGRDGDPVNPEGFGT) form a disordered region. Residues 345–355 (LDSRRTGRDGD) show a composition bias toward basic and acidic residues.

Belongs to the protein kinase superfamily. Ser/Thr protein kinase family.

The enzyme catalyses L-seryl-[protein] + ATP = O-phospho-L-seryl-[protein] + ADP + H(+). The catalysed reaction is L-threonyl-[protein] + ATP = O-phospho-L-threonyl-[protein] + ADP + H(+). This is Protein kinase ORF74 (ORF74) from Ictalurid herpesvirus 1 (strain Auburn) (IcHV-1).